The following is a 43-amino-acid chain: Protein PsbN (43 aa).

The helical transmembrane segment at 7 to 29 (ITIFLSGLLVSFTGYALYTAFGQ) threads the bilayer.

Belongs to the PsbN family.

It is found in the plastid membrane. Functionally, may play a role in photosystem I and II biogenesis. The sequence is that of Protein PsbN from Cuscuta reflexa (Southern Asian dodder).